We begin with the raw amino-acid sequence, 196 residues long: 3-isopropylmalate dehydratase small subunit (196 aa).

This sequence belongs to the LeuD family. LeuD type 1 subfamily. In terms of assembly, heterodimer of LeuC and LeuD.

The enzyme catalyses (2R,3S)-3-isopropylmalate = (2S)-2-isopropylmalate. The protein operates within amino-acid biosynthesis; L-leucine biosynthesis; L-leucine from 3-methyl-2-oxobutanoate: step 2/4. Catalyzes the isomerization between 2-isopropylmalate and 3-isopropylmalate, via the formation of 2-isopropylmaleate. In Corynebacterium aurimucosum (strain ATCC 700975 / DSM 44827 / CIP 107346 / CN-1) (Corynebacterium nigricans), this protein is 3-isopropylmalate dehydratase small subunit.